The chain runs to 148 residues: Cell division protein SepF (148 aa).

Residues 1–59 are disordered; it reads MNNKFKDFFGFGDNDSYEERDAYEEHYDEQEEMQNSNRPTNSRDSNVVSIKAGQAGSGP. Residues 33–48 show a composition bias toward polar residues; the sequence is MQNSNRPTNSRDSNVV.

This sequence belongs to the SepF family. As to quaternary structure, homodimer. Interacts with FtsZ.

It is found in the cytoplasm. Functionally, cell division protein that is part of the divisome complex and is recruited early to the Z-ring. Probably stimulates Z-ring formation, perhaps through the cross-linking of FtsZ protofilaments. Its function overlaps with FtsA. The chain is Cell division protein SepF from Lactobacillus delbrueckii subsp. bulgaricus (strain ATCC BAA-365 / Lb-18).